We begin with the raw amino-acid sequence, 183 residues long: ATP synthase subunit b, chloroplastic (183 aa).

A helical transmembrane segment spans residues 27 to 49 (LATNLINLTVVVGVLIFFGKGVL).

The protein belongs to the ATPase B chain family. In terms of assembly, F-type ATPases have 2 components, F(1) - the catalytic core - and F(0) - the membrane proton channel. F(1) has five subunits: alpha(3), beta(3), gamma(1), delta(1), epsilon(1). F(0) has four main subunits: a(1), b(1), b'(1) and c(10-14). The alpha and beta chains form an alternating ring which encloses part of the gamma chain. F(1) is attached to F(0) by a central stalk formed by the gamma and epsilon chains, while a peripheral stalk is formed by the delta, b and b' chains.

It is found in the plastid. It localises to the chloroplast thylakoid membrane. In terms of biological role, f(1)F(0) ATP synthase produces ATP from ADP in the presence of a proton or sodium gradient. F-type ATPases consist of two structural domains, F(1) containing the extramembraneous catalytic core and F(0) containing the membrane proton channel, linked together by a central stalk and a peripheral stalk. During catalysis, ATP synthesis in the catalytic domain of F(1) is coupled via a rotary mechanism of the central stalk subunits to proton translocation. Component of the F(0) channel, it forms part of the peripheral stalk, linking F(1) to F(0). The sequence is that of ATP synthase subunit b, chloroplastic from Hordeum vulgare (Barley).